The primary structure comprises 1551 residues: UDP-glucose:glycoprotein glucosyltransferase 1 (1551 aa).

The first 42 residues, 1-42, serve as a signal peptide directing secretion; sequence MCSRGDANAAGAAAARRVTGLCYNMGLLIALALLCLFSLAEA. 4 N-linked (GlcNAc...) asparagine glycosylation sites follow: Asn-269, Asn-536, Asn-1015, and Asn-1228. A glucosyltransferase region spans residues 1244 to 1551; sequence KTEEVKQDKD…QEGSQKHEEL (308 aa). Residue Ser-1277 is modified to Phosphoserine. The tract at residues 1531–1551 is disordered; sequence KELGTLHEEETQEGSQKHEEL. The Prevents secretion from ER motif lies at 1548–1551; it reads HEEL.

Belongs to the glycosyltransferase 8 family. In terms of assembly, monomer as well as in a tight complex with SELENOF. Interacts with METTL23. Part of a large chaperone multiprotein complex comprising DNAJB11, HSP90B1, HSPA5, HYOU, PDIA2, PDIA4, PDIA6, PPIB, SDF2L1, UGGT1 and very small amounts of ERP29, but not, or at very low levels, CALR nor CANX. Ca(2+) is required as a cofactor.

Its subcellular location is the endoplasmic reticulum lumen. It is found in the endoplasmic reticulum-Golgi intermediate compartment. It carries out the reaction N(4)-(alpha-D-Man-(1-&gt;2)-alpha-D-Man-(1-&gt;2)-alpha-D-Man-(1-&gt;3)-[alpha-D-Man-(1-&gt;2)-alpha-D-Man-(1-&gt;3)-[alpha-D-Man-(1-&gt;2)-alpha-D-Man-(1-&gt;6)]-alpha-D-Man-(1-&gt;6)]-beta-D-Man-(1-&gt;4)-beta-D-GlcNAc-(1-&gt;4)-beta-D-GlcNAc)-L-asparaginyl-[protein] (N-glucan mannose isomer 9A1,2,3B1,2,3) + UDP-alpha-D-glucose = N(4)-(alpha-D-Glc-(1-&gt;3)-alpha-D-Man-(1-&gt;2)-alpha-D-Man-(1-&gt;2)-alpha-D-Man-(1-&gt;3)-[alpha-D-Man-(1-&gt;2)-alpha-D-Man-(1-&gt;3)-[alpha-D-Man-(1-&gt;2)-alpha-D-Man-(1-&gt;6)]-alpha-D-Man-(1-&gt;6)]-beta-D-Man-(1-&gt;4)-beta-D-GlcNAc-(1-&gt;4)-beta-D-GlcNAc)-L-asparaginyl-[protein] + UDP + H(+). Its pathway is protein modification; protein glycosylation. Its function is as follows. Recognizes glycoproteins with minor folding defects. Reglucosylates single N-glycans near the misfolded part of the protein, thus providing quality control for protein folding in the endoplasmic reticulum. Reglucosylated proteins are recognized by calreticulin for recycling to the endoplasmic reticulum and refolding or degradation. This chain is UDP-glucose:glycoprotein glucosyltransferase 1 (Uggt1), found in Rattus norvegicus (Rat).